Here is a 283-residue protein sequence, read N- to C-terminus: Pantothenate synthetase (283 aa).

30-37 is an ATP binding site; it reads MGNLHDGH. The Proton donor role is filled by His37. Gln61 is a binding site for (R)-pantoate. Gln61 provides a ligand contact to beta-alanine. An ATP-binding site is contributed by 149-152; the sequence is GEKD. Gln155 serves as a coordination point for (R)-pantoate. 186–189 provides a ligand contact to ATP; it reads LSSR.

It belongs to the pantothenate synthetase family. As to quaternary structure, homodimer.

It localises to the cytoplasm. It catalyses the reaction (R)-pantoate + beta-alanine + ATP = (R)-pantothenate + AMP + diphosphate + H(+). It participates in cofactor biosynthesis; (R)-pantothenate biosynthesis; (R)-pantothenate from (R)-pantoate and beta-alanine: step 1/1. Its function is as follows. Catalyzes the condensation of pantoate with beta-alanine in an ATP-dependent reaction via a pantoyl-adenylate intermediate. This is Pantothenate synthetase from Escherichia coli O17:K52:H18 (strain UMN026 / ExPEC).